Reading from the N-terminus, the 1916-residue chain is Diacylglycerol kinase eta (1916 aa).

The disordered stretch occupies residues 1-36; that stretch reads MAHIKLDTLDVVQRPGTTRRSNSNSGRSSACSSGSL. Residues 19–36 are compositionally biased toward low complexity; it reads RRSNSNSGRSSACSSGSL. The 94-residue stretch at 82-175 folds into the PH domain; that stretch reads AIIKEGFLLK…WLGSLKTATT (94 aa). Phorbol-ester/DAG-type zinc fingers lie at residues 195-245 and 268-319; these read HHHW…IANC and PHQW…AVAC. Positions 350-486 constitute a DAGKc domain; sequence GNFSPLLVFV…DRWSIMVFEK (137 aa). Over residues 623–644 the composition is skewed to basic and acidic residues; it reads DEINTKERRSSRSLRSSEKEAL. 4 disordered regions span residues 623–648, 846–874, 1018–1067, and 1183–1214; these read DEIN…QSRA, DRGK…KEDN, TLCS…DDNP, and TSTS…SVKP. An SAM domain is found at 1853-1916; the sequence is WSVNEVVTWL…LQAIKDLSEN (64 aa).

This sequence belongs to the eukaryotic diacylglycerol kinase family.

Its subcellular location is the cytoplasm. It catalyses the reaction a 1,2-diacyl-sn-glycerol + ATP = a 1,2-diacyl-sn-glycero-3-phosphate + ADP + H(+). In terms of biological role, phosphorylates diacylglycerol (DAG) to generate phosphatidic acid (PA). The sequence is that of Diacylglycerol kinase eta from Drosophila ananassae (Fruit fly).